Consider the following 42-residue polypeptide: Photosystem I reaction center subunit IX (42 aa).

Residues 7–27 traverse the membrane as a helical segment; that stretch reads YLSTAPVIATIWFGFLAGLLI.

The protein belongs to the PsaJ family.

It is found in the plastid. Its subcellular location is the chloroplast thylakoid membrane. Its function is as follows. May help in the organization of the PsaE and PsaF subunits. The polypeptide is Photosystem I reaction center subunit IX (Chaetosphaeridium globosum (Charophycean green alga)).